Here is a 172-residue protein sequence, read N- to C-terminus: DNA-directed RNA polymerase II subunit RPB7 (172 aa).

It belongs to the eukaryotic RPB7/RPC8 RNA polymerase subunit family. Component of the RNA polymerase II (Pol II) complex consisting of 12 subunits. RPB4 and RPB7 form a subcomplex that protrudes from the 10-subunit Pol II core complex.

It is found in the nucleus. Functionally, DNA-dependent RNA polymerase catalyzes the transcription of DNA into RNA using the four ribonucleoside triphosphates as substrates. Component of RNA polymerase II which synthesizes mRNA precursors and many functional non-coding RNAs. Pol II is the central component of the basal RNA polymerase II transcription machinery. It is composed of mobile elements that move relative to each other. RPB7 is part of a subcomplex with RPB4 that binds to a pocket formed by RPB1, RPB2 and RPB6 at the base of the clamp element. The RPB4-RPB7 subcomplex seems to lock the clamp via RPB7 in the closed conformation thus preventing double-stranded DNA to enter the active site cleft. The RPB4-RPB7 subcomplex binds single-stranded DNA and RNA. The chain is DNA-directed RNA polymerase II subunit RPB7 (polr2g) from Danio rerio (Zebrafish).